Consider the following 1303-residue polypeptide: Latent-transforming growth factor beta-binding protein 3 (1303 aa).

The N-terminal stretch at 1-43 is a signal peptide; that stretch reads MPGPRGAAGGLAPEMRGAGAAGLLALLLLLLLLLLGLGGRVEG. N-linked (GlcNAc...) asparagine glycosylation occurs at Asn-89. The region spanning 109–141 is the EGF-like 1 domain; sequence RVVVCPLPCMNGGQCSSRNQCLCPPDFTGRFCQ. Cystine bridges form between Cys-113–Cys-123, Cys-117–Cys-129, Cys-131–Cys-140, Cys-279–Cys-303, Cys-289–Cys-316, and Cys-304–Cys-319. The disordered stretch occupies residues 247 to 282; sequence SSNAESAAPSQHLLPHPKPSHPRPPTQKPLGRCFQD. The TB 1 domain occupies 277-331; that stretch reads GRCFQDTLPKQPCGSNPLPGLTKQEDCCGSIGTAWGQSKCHKCPQLQYTGVQKPG. The N-linked (GlcNAc...) asparagine glycan is linked to Asn-349. The region spanning 355-395 is the EGF-like 2; calcium-binding domain; it reads DINECAMPGVCRHGDCLNNPGSYRCVCPPGHSLGPSRTQCI. Cystine bridges form between Cys-359–Cys-370, Cys-365–Cys-379, Cys-381–Cys-394, Cys-405–Cys-428, Cys-415–Cys-440, Cys-429–Cys-443, and Cys-430–Cys-455. Residues 403-455 enclose the TB 2 domain; that stretch reads SLCFRLVSPEHQCQHPLTTRLTRQLCCCSVGKAWGARCQRCPTDGTAAFKEIC. The disordered stretch occupies residues 478–552; sequence FSLFLHPDGP…ISRPSPPTMR (75 aa). The segment covering 529 to 540 has biased composition (low complexity); that stretch reads PTATTTPARPYP. The EGF-like 3 domain maps to 574–615; it reads ETDECRLNQNICGHGECVPGPPDYSCHCNPGYRSHPQHRYCV. 37 disulfide bridges follow: Cys-578–Cys-590, Cys-585–Cys-599, Cys-601–Cys-614, Cys-620–Cys-632, Cys-625–Cys-641, Cys-664–Cys-676, Cys-670–Cys-685, Cys-687–Cys-701, Cys-748–Cys-759, Cys-754–Cys-768, Cys-770–Cys-783, Cys-789–Cys-800, Cys-795–Cys-809, Cys-811–Cys-824, Cys-830–Cys-841, Cys-836–Cys-850, Cys-852–Cys-864, Cys-870–Cys-883, Cys-877–Cys-892, Cys-894–Cys-907, Cys-919–Cys-942, Cys-929–Cys-954, Cys-943–Cys-959, Cys-944–Cys-971, Cys-997–Cys-1010, Cys-1005–Cys-1019, Cys-1021–Cys-1034, Cys-1040–Cys-1051, Cys-1046–Cys-1060, Cys-1062–Cys-1075, Cys-1086–Cys-1097, Cys-1092–Cys-1106, Cys-1108–Cys-1121, Cys-1138–Cys-1162, Cys-1148–Cys-1174, Cys-1163–Cys-1177, and Cys-1164–Cys-1186. The region spanning 616–659 is the EGF-like 4; calcium-binding domain; the sequence is DVNECEAEPCGPGRGICMNTGGSYNCHCNRGYRLHVGAGGRSCV. The EGF-like 5; calcium-binding domain occupies 660–702; the sequence is DLNECAKPHLCGDGGFCINFPGHYKCNCYPGYRLKASRPPVCE. The EGF-like 6; calcium-binding domain maps to 744–784; it reads DVNECAEGSPCSPGWCENLPGSFRCTCAQGYAPAPDGRSCL. The region spanning 785-825 is the EGF-like 7; calcium-binding domain; the sequence is DVDECEAGDVCDNGICSNTPGSFQCQCLSGYHLSRDRSHCE. An EGF-like 8; calcium-binding domain is found at 826–865; that stretch reads DIDECDFPAACIGGDCINTNGSYRCLCPQGHRLVGGRKCQ. An N-linked (GlcNAc...) asparagine glycan is attached at Asn-845. An EGF-like 9; calcium-binding domain is found at 866–908; that stretch reads DIDECSQDPSLCLPHGACKNLQGSYVCVCDEGFTPTQDQHGCE. Residues 917–971 enclose the TB 3 domain; sequence KECYLNFDDTVFCDSVLATNVTQQECCCSLGAGWGDHCEIYPCPVYSSAEFHSLC. N-linked (GlcNAc...) asparagine glycosylation is present at Asn-936. In terms of domain architecture, EGF-like 10; calcium-binding spans 993–1035; the sequence is DIDECMLFGSEICKEGKCVNTQPGYECYCKQGFYYDGNLLECV. Positions 1036–1076 constitute an EGF-like 11; calcium-binding domain; sequence DVDECLDESNCRNGVCENTRGGYRCACTPPAEYSPAQRQCL. Positions 1082–1122 constitute an EGF-like 12; calcium-binding domain; that stretch reads DVDECQDPAACRPGRCVNLPGSYRCECRPPWVPGPSGRDCQ. The 51-residue stretch at 1136 to 1186 folds into the TB 4 domain; it reads DVCWSQRGEDGMCAGPLAGPALTFDDCCCRQGRGWGAQCRPCPPRGAGSHC. The segment covering 1188 to 1198 has biased composition (polar residues); the sequence is TSQSESNSFWD. A disordered region spans residues 1188–1219; it reads TSQSESNSFWDTSPLLLGKPPRDEDSSEEDSD. The region spanning 1254–1298 is the EGF-like 13; calcium-binding domain; that stretch reads DIDECRELNQRGLLCKSERCVNTSGSFRCVCKAGFARSRPHGACV. 2 disulfide bridges follow: Cys-1258/Cys-1273 and Cys-1268/Cys-1282. N-linked (GlcNAc...) asparagine glycosylation is present at Asn-1275.

The protein belongs to the LTBP family. As to quaternary structure, forms part of the large latent transforming growth factor beta precursor complex; removal is essential for activation of complex. Interacts with EFEMP2. Contains hydroxylated asparagine residues. Post-translationally, two intrachain disulfide bonds from the TB3 domain are rearranged upon TGFB1 binding, and form interchain bonds with TGFB1 propeptide, anchoring it to the extracellular matrix. Isoform 2: Expressed prominently in heart, skeletal muscle, prostate, testis, small intestine and ovary. Isoform 1: Strongly expressed in pancreas and liver.

Its subcellular location is the secreted. It localises to the extracellular space. The protein resides in the extracellular matrix. Functionally, key regulator of transforming growth factor beta (TGFB1, TGFB2 and TGFB3) that controls TGF-beta activation by maintaining it in a latent state during storage in extracellular space. Associates specifically via disulfide bonds with the Latency-associated peptide (LAP), which is the regulatory chain of TGF-beta, and regulates integrin-dependent activation of TGF-beta. The polypeptide is Latent-transforming growth factor beta-binding protein 3 (LTBP3) (Homo sapiens (Human)).